The chain runs to 119 residues: Large ribosomal subunit protein bL20 (119 aa).

Belongs to the bacterial ribosomal protein bL20 family.

Functionally, binds directly to 23S ribosomal RNA and is necessary for the in vitro assembly process of the 50S ribosomal subunit. It is not involved in the protein synthesizing functions of that subunit. The chain is Large ribosomal subunit protein bL20 from Laribacter hongkongensis (strain HLHK9).